A 143-amino-acid chain; its full sequence is Putative pre-16S rRNA nuclease (143 aa).

This sequence belongs to the YqgF nuclease family.

The protein localises to the cytoplasm. In terms of biological role, could be a nuclease involved in processing of the 5'-end of pre-16S rRNA. The protein is Putative pre-16S rRNA nuclease of Marinobacter nauticus (strain ATCC 700491 / DSM 11845 / VT8) (Marinobacter aquaeolei).